The following is a 325-amino-acid chain: Reaction center protein M chain (325 aa).

A run of 3 helical transmembrane segments spans residues 53 to 79 (LGFT…LASV), 111 to 140 (EGGW…AEAL), and 143 to 168 (SQHL…PVMM). Residues histidine 182 and histidine 202 each coordinate (7R,8Z)-bacteriochlorophyll b. A helical transmembrane segment spans residues 198–226 (YNPFHMLSIAFLYGSALLFAMHGATILAV). Fe cation-binding residues include histidine 219 and glutamate 234. Residue tryptophan 252 participates in a ubiquinone binding. Fe cation is bound at residue histidine 266.

Belongs to the reaction center PufL/M/PsbA/D family. Reaction center is composed of four bacteriochlorophylls, two bacteriopheophytins, two ubiquinones, one iron, and two highly hydrophobic polypeptide chains (designated L and M).

The protein localises to the cellular chromatophore membrane. The reaction center is a membrane-bound complex that mediates the initial photochemical event in the electron transfer process of photosynthesis. The polypeptide is Reaction center protein M chain (pufM) (Allochromatium vinosum (strain ATCC 17899 / DSM 180 / NBRC 103801 / NCIMB 10441 / D) (Chromatium vinosum)).